Reading from the N-terminus, the 549-residue chain is S-methyl thiourocanate hydratase (549 aa).

Met49, Gly173, Met174, Gly175, Asp193, Ser198, Asn239, Ala240, Gln260, Val270, and Tyr318 together coordinate NAD(+).

Belongs to the urocanase family. S-methyl thiourocanate hydratase subfamily. It depends on NAD(+) as a cofactor.

It carries out the reaction S-methyl-(E)-thiourocanate + H2O = S-methyl-thiohydantoin-5-propanoate. Functionally, hydratase involved in the catabolism of S-methyl ergothioneine. Catalyzes the 1,4-addition of H(2)O to S-methyl thiourocanate, leading to the formation of S-methyl-thiohydantoin-5-propanoate, the second step in S-methyl ergothioneine degradation. Cannot use urocanate or thiourocanate as substrate. This is S-methyl thiourocanate hydratase from Variovorax sp. (strain JCM 16519 / RA8).